The primary structure comprises 394 residues: Phosphoglycerate kinase (394 aa).

Substrate-binding positions include D21–N23, R36, H59–R62, R118, and R151. S183 is modified (phosphoserine). ATP is bound by residues K201 and G292. T299 carries the phosphothreonine modification. ATP-binding positions include E323 and G350–S353.

It belongs to the phosphoglycerate kinase family. As to quaternary structure, monomer.

Its subcellular location is the cytoplasm. It carries out the reaction (2R)-3-phosphoglycerate + ATP = (2R)-3-phospho-glyceroyl phosphate + ADP. Its pathway is carbohydrate degradation; glycolysis; pyruvate from D-glyceraldehyde 3-phosphate: step 2/5. The polypeptide is Phosphoglycerate kinase (Bacillus cereus (strain B4264)).